Consider the following 137-residue polypeptide: Putative pre-16S rRNA nuclease (137 aa).

This sequence belongs to the YqgF nuclease family.

Its subcellular location is the cytoplasm. Could be a nuclease involved in processing of the 5'-end of pre-16S rRNA. This Anaeromyxobacter dehalogenans (strain 2CP-C) protein is Putative pre-16S rRNA nuclease.